Consider the following 358-residue polypeptide: Oxidase FUB9 (358 aa).

The FMN hydroxy acid dehydrogenase domain maps to 6 to 350; the sequence is SSKPQIFSIQ…SPAHLSILNA (345 aa). Position 32 (Tyr-32) interacts with a 2-oxocarboxylate. FMN contacts are provided by Ser-114, Gln-138, and Thr-166. Position 175 (Arg-175) interacts with a 2-oxocarboxylate. Lys-221 is a binding site for FMN. Residue His-245 is the Proton acceptor of the active site. A 2-oxocarboxylate is bound at residue Arg-248. FMN is bound by residues 276-280 and 299-300; these read DGGFR and GR.

It belongs to the FMN-dependent alpha-hydroxy acid dehydrogenase family. FMN is required as a cofactor.

Its pathway is mycotoxin biosynthesis. Its function is as follows. Oxidase; part of the gene cluster that mediates the biosynthesis of fusaric acid, a mycotoxin with low to moderate toxicity to animals and humans, but with high phytotoxic properties. L-aspartate is suggested as fusaric acid amino acid precursor that is activated and further processed to O-acetyl-L-homoserine by cluster enzymes aspartate kinase FUB3 and homoserine O-acetyltransferase FUB5, as well as enzymes of the primary metabolism. The polyketide synthase (PKS) FUB1 generates the triketide trans-2-hexenal which is presumptively released by the hydrolase FUB4 and linked to the NRPS-bound amino acid precursor by NAD(P)-dependent dehydrogenase FUB6. FUB1, FUB4, and the non-canonical NRPS Fub8 may form an enzyme complex. Further processing of the NRPS-bound intermediate might be carried out by FUB6 and the sulfhydrylase FUB7, enabling a spontaneous electrocyclization to close the carbon backbone of fusaric acid. Dihydrofusaric acid is likely to be released via reduction by the thioester reductase (TR) domain of FUB8 whereupon the final oxidation to fusaric acid may (also) be performed by the FMN-dependent dehydrogenase FUB9. This is Oxidase FUB9 from Gibberella fujikuroi (strain CBS 195.34 / IMI 58289 / NRRL A-6831) (Bakanae and foot rot disease fungus).